The primary structure comprises 673 residues: DNA ligase (673 aa).

Residues 33–37, 83–84, and Glu-117 each bind NAD(+); these read DHQYD and SL. The active-site N6-AMP-lysine intermediate is Lys-119. Residues Arg-140, Glu-175, Lys-282, and Lys-306 each contribute to the NAD(+) site. Residues Cys-400, Cys-403, Cys-418, and Cys-424 each contribute to the Zn(2+) site. The region spanning 592–673 is the BRCT domain; it reads RGSSAISGKT…WVKMVEDARS (82 aa).

It belongs to the NAD-dependent DNA ligase family. LigA subfamily. Mg(2+) serves as cofactor. The cofactor is Mn(2+).

It carries out the reaction NAD(+) + (deoxyribonucleotide)n-3'-hydroxyl + 5'-phospho-(deoxyribonucleotide)m = (deoxyribonucleotide)n+m + AMP + beta-nicotinamide D-nucleotide.. Its function is as follows. DNA ligase that catalyzes the formation of phosphodiester linkages between 5'-phosphoryl and 3'-hydroxyl groups in double-stranded DNA using NAD as a coenzyme and as the energy source for the reaction. It is essential for DNA replication and repair of damaged DNA. The polypeptide is DNA ligase (Anaplasma marginale (strain St. Maries)).